The sequence spans 427 residues: 12-alpha,13-alpha-dihydroxyfumitremorgin C prenyltransferase (427 aa).

Glu94 is a binding site for substrate. 8 residues coordinate dimethylallyl diphosphate: Arg105, Lys192, Tyr194, Tyr268, Gln353, Tyr355, Tyr419, and Tyr423.

It belongs to the tryptophan dimethylallyltransferase family.

The enzyme catalyses 12alpha,13alpha-dihydroxyfumitremorgin C + dimethylallyl diphosphate = fumitremorgin B + diphosphate. The protein operates within mycotoxin biosynthesis. Its function is as follows. 12-alpha,13-alpha-dihydroxyfumitremorgin C prenyltransferase; part of the gene cluster that mediates the biosynthesis of fumitremorgins, indole alkaloids that carry not only intriguing chemical structures, but also interesting biological and pharmacological activities. The biosynthesis of fumitremorgin-type alkaloids begins by condensation of the two amino acids L-tryptophan and L-proline to brevianamide F, catalyzed by the non-ribosomal peptide synthetase ftmA. Brevianamide F is then prenylated by the prenyltransferase ftmPT1/ftmB in the presence of dimethylallyl diphosphate, resulting in the formation of tryprostatin B. The three cytochrome P450 monooxygenases, ftmP450-1/ftmC, ftmP450-2/ftmE and ftmP450-3/FtmG, are responsible for the conversion of tryprostatin B to 6-hydroxytryprostatin B, tryprostatin A to fumitremorgin C and fumitremorgin C to 12,13-dihydroxyfumitremorgin C, respectively. The putative methyltransferase ftmMT/ftmD is expected for the conversion of 6-hydroxytryprostatin B to tryprostatin A. FtmPT2/FtmH catalyzes the prenylation of 12,13-dihydroxyfumitre-morgin C in the presence of dimethylallyl diphosphate, resulting in the formation of fumitremorgin B. Fumitremorgin B is further converted to verruculogen by ftmOx1/ftmF via the insertion of an endoperoxide bond between the two prenyl moieties. In some fungal species, verruculogen is further converted to fumitremorgin A, but the enzymes involved in this step have not been identified yet. The polypeptide is 12-alpha,13-alpha-dihydroxyfumitremorgin C prenyltransferase (Aspergillus fumigatus (Neosartorya fumigata)).